The sequence spans 154 residues: Probable chemoreceptor glutamine deamidase CheD (154 aa).

It belongs to the CheD family.

It carries out the reaction L-glutaminyl-[protein] + H2O = L-glutamyl-[protein] + NH4(+). Functionally, probably deamidates glutamine residues to glutamate on methyl-accepting chemotaxis receptors (MCPs), playing an important role in chemotaxis. This is Probable chemoreceptor glutamine deamidase CheD from Methanococcus maripaludis (strain C5 / ATCC BAA-1333).